We begin with the raw amino-acid sequence, 173 residues long: Transcription factor E (173 aa).

The 86-residue stretch at 3 to 88 (NNPIIQQVLL…TWRATFTKLP (86 aa)) folds into the HTH TFE/IIEalpha-type domain.

Belongs to the TFE family. Monomer. Interaction with RNA polymerase subunits RpoF and RpoE is necessary for Tfe stimulatory transcription activity. Able to interact with Tbp and RNA polymerase in the absence of DNA promoter. Interacts both with the preinitiation and elongation complexes.

Its function is as follows. Transcription factor that plays a role in the activation of archaeal genes transcribed by RNA polymerase. Facilitates transcription initiation by enhancing TATA-box recognition by TATA-box-binding protein (Tbp), and transcription factor B (Tfb) and RNA polymerase recruitment. Not absolutely required for transcription in vitro, but particularly important in cases where Tbp or Tfb function is not optimal. It dynamically alters the nucleic acid-binding properties of RNA polymerases by stabilizing the initiation complex and destabilizing elongation complexes. Seems to translocate with the RNA polymerase following initiation and acts by binding to the non template strand of the transcription bubble in elongation complexes. This is Transcription factor E from Methanococcus aeolicus (strain ATCC BAA-1280 / DSM 17508 / OCM 812 / Nankai-3).